A 596-amino-acid chain; its full sequence is Two-component response regulator ARR12 (596 aa).

Residues 18–133 (RVLAVDDDQT…ELKNIWQHVV (116 aa)) enclose the Response regulatory domain. Position 69 is a 4-aspartylphosphate (Asp-69). A compositionally biased stretch (basic and acidic residues) spans 138-153 (DKNRGSNNNGDKRDGS). The interval 138 to 192 (DKNRGSNNNGDKRDGSGNEGVGNSDQNNGKGNRKRKDQYNEDEDEDRDDNDDSCA) is disordered. Residues 158-167 (VGNSDQNNGK) are compositionally biased toward polar residues. Over residues 177-189 (NEDEDEDRDDNDD) the composition is skewed to acidic residues. The short motif at 194-197 (KKQR) is the Nuclear localization signal element. The myb-like GARP DNA-binding region spans 197-247 (RVVWTVELHKKFVAAVNQLGYEKAMPKKILDLMNVEKLTRENVASHLQKFR). The segment at 437 to 467 (NAVSSSTHPPPPAHNSNSINHQFDVSPLPHS) is disordered. A compositionally biased stretch (polar residues) spans 450 to 459 (HNSNSINHQF).

The protein belongs to the ARR family. Type-B subfamily. As to quaternary structure, binds the target DNA as a monomer. Post-translationally, two-component system major event consists of a His-to-Asp phosphorelay between a sensor histidine kinase (HK) and a response regulator (RR). In plants, the His-to-Asp phosphorelay involves an additional intermediate named Histidine-containing phosphotransfer protein (HPt). This multistep phosphorelay consists of a His-Asp-His-Asp sequential transfer of a phosphate group between first a His and an Asp of the HK protein, followed by the transfer to a conserved His of the HPt protein and finally the transfer to an Asp in the receiver domain of the RR protein. As to expression, detected in the whole plant. Predominantly expressed in leaves. Expressed at the root transition zone.

It is found in the nucleus. Functionally, transcriptional activator that binds specifically to the DNA sequence 5'-[AG]GATT-3'. Functions as a response regulator involved in His-to-Asp phosphorelay signal transduction system. Phosphorylation of the Asp residue in the receiver domain activates the ability of the protein to promote the transcription of target genes. Could directly activate some type-A response regulators in response to cytokinins. Involved in the root-meristem size determination through the regulation of cell differentiation. Involved in activating SHY2 during meristem growth and controls PIN expression via activation of SHY2. In Arabidopsis thaliana (Mouse-ear cress), this protein is Two-component response regulator ARR12 (ARR12).